Reading from the N-terminus, the 187-residue chain is Endoribonuclease YbeY (187 aa).

Zn(2+)-binding residues include histidine 151, histidine 155, and histidine 161.

Belongs to the endoribonuclease YbeY family. It depends on Zn(2+) as a cofactor.

Its subcellular location is the cytoplasm. In terms of biological role, single strand-specific metallo-endoribonuclease involved in late-stage 70S ribosome quality control and in maturation of the 3' terminus of the 16S rRNA. This chain is Endoribonuclease YbeY, found in Prochlorococcus marinus (strain MIT 9313).